The chain runs to 356 residues: MTAEPTVAARPQQIDALRTLIRLGSLHTPMVVRTAATLRLVDHILAGARTVKALAARTDTRPEALLRLIRHLVAIGLLEEDAPGEFVPTEVGELLADDHPAAQRAWHDLTQAVARADISFTRLPDAIRTGRPTYESIYGKPFYEDLAGRPDLRASFDSLLACDQDVAFDAPAAAYDWTNVRHVLDVGGGKGGFAAAIARRAPHVSATVLEMAGTVDTARSYLKDEGLSDRVDVVEGDFFEPLPRKADAIILSFVLLNWPDHDAVRILTRCAEALEPGGRILIHERDDLHENSFNEQFTELDLRMLVFLGGALRTREKWDGLAASAGLVVEEVRQLPSPTIPYDLSLLVLAPAATGA.

Arg-153 is an S-adenosyl-L-methionine binding site. Asp-163 contributes to the substrate binding site. S-adenosyl-L-methionine contacts are provided by residues Gly-187, Glu-210, 237–238 (DF), and Ser-252. Residues Asn-257 and Arg-303 each contribute to the substrate site.

Belongs to the class I-like SAM-binding methyltransferase superfamily. Cation-independent O-methyltransferase family. As to quaternary structure, homodimer and homotetramer in equilibrium.

It catalyses the reaction carminomycin + S-adenosyl-L-methionine = daunorubicin + S-adenosyl-L-homocysteine + H(+). The protein operates within antibiotic biosynthesis; daunorubicin biosynthesis. It participates in antibiotic biosynthesis; carminomycin biosynthesis. Its function is as follows. Involved in the biosynthesis of the anthracyclines carminomycin and daunorubicin (daunomycin) which are aromatic polyketide antibiotics that exhibit high cytotoxicity and are widely applied in the chemotherapy of a variety of cancers. In vivo, catalyzes the transfer of a methyl group from S-adenosyl-L-methionine to the 4-O-position of carminomycin to form daunorubicin. In vitro, it also methylates the anthracyclines rhodomycin D (10-carbomethoxy-13-deoxycarminomycin) and 13-deoxy-carminomycin at the 4-hydroxyl position. It is quite specific with respect to the length of the carbohydrate chain at the C7 position, but it can accept substrates with bulky substituent at C10 position. The protein is Carminomycin 4-O-methyltransferase DnrK (dnrK) of Streptomyces peucetius.